Consider the following 345-residue polypeptide: D-erythrose-4-phosphate dehydrogenase (345 aa).

11 to 12 (RI) contacts NAD(+). Substrate-binding positions include 158 to 160 (SCT), Arg204, 217 to 218 (TK), and Arg240. The active-site Nucleophile is the Cys159. Asn322 lines the NAD(+) pocket.

Belongs to the glyceraldehyde-3-phosphate dehydrogenase family. Epd subfamily. In terms of assembly, homotetramer.

Its subcellular location is the cytoplasm. It catalyses the reaction D-erythrose 4-phosphate + NAD(+) + H2O = 4-phospho-D-erythronate + NADH + 2 H(+). Its pathway is cofactor biosynthesis; pyridoxine 5'-phosphate biosynthesis; pyridoxine 5'-phosphate from D-erythrose 4-phosphate: step 1/5. Its function is as follows. Catalyzes the NAD-dependent conversion of D-erythrose 4-phosphate to 4-phosphoerythronate. This Vibrio parahaemolyticus serotype O3:K6 (strain RIMD 2210633) protein is D-erythrose-4-phosphate dehydrogenase.